The following is a 438-amino-acid chain: Ribosome biogenesis protein NOP53 (438 aa).

2 disordered regions span residues 1-23 and 247-346; these read MVAG…WRKG and HPKY…RKKE. Residues 12 to 21 show a composition bias toward basic residues; sequence GSRHNKKYWR. Composition is skewed to basic and acidic residues over residues 265 to 288, 297 to 318, and 325 to 346; these read KSMK…MTKE, QKLD…DSHN, and LHKE…RKKE.

This sequence belongs to the NOP53 family.

It localises to the nucleus. The protein resides in the nucleolus. Its subcellular location is the nucleoplasm. In terms of biological role, may play a role in ribosome biogenesis, being required for integration of the 5S RNP into the ribosomal large subunit. This chain is Ribosome biogenesis protein NOP53, found in Caenorhabditis elegans.